The chain runs to 719 residues: Calpain-12 (719 aa).

The 297-residue stretch at 45 to 341 folds into the Calpain catalytic domain; that stretch reads LFRDPYFPAG…FDTVQICSLS (297 aa). Catalysis depends on residues cysteine 105, histidine 259, and asparagine 283. The domain III stretch occupies residues 342 to 540; the sequence is PEVLGPSPEG…DDVISADLQS (199 aa). The segment covering 393-402 has biased composition (acidic residues); it reads DEEDDEDEEG. The tract at residues 393–418 is disordered; sequence DEEDDEDEEGPWGGWGAAGARGPARG. The interval 541–719 is domain IV; the sequence is LQGPYLPLEL…RQWMEVATFS (179 aa). The EF-hand domain occupies 620-655; that stretch reads GYLLEWQAIFNKFDEDTSGTMNSYELRLALNAAGFH. Residues aspartate 633, aspartate 635, serine 637, threonine 639, and glutamate 644 each coordinate Ca(2+).

The protein belongs to the peptidase C2 family.

Functionally, calcium-regulated non-lysosomal thiol-protease. The chain is Calpain-12 (CAPN12) from Homo sapiens (Human).